Consider the following 1089-residue polypeptide: SUMO-specific isopeptidase USPL1 (1089 aa).

The disordered stretch occupies residues 90–128 (LISPDSEDCPTPSKPQKRKRLETNCRNSPLPVHSKKTRS). In terms of domain architecture, USP spans 215–488 (VQWKNTQALC…ETHIVIWERK (274 aa)). Cys224 serves as the catalytic Nucleophile. Residues 224-483 (CWLDCILSAL…EVPASETHIV (260 aa)) are SUMO-binding. Residue His444 is the Proton acceptor of the active site. Disordered stretches follow at residues 687 to 739 (DSQT…KEDQ), 791 to 817 (ISRRSKRMSRKAKHMEELSPRNSSPPL), 835 to 868 (LREQEGSRPAPLRHRSPGNESAISPASRGDAAED), and 891 to 928 (LISSPHREPSLSDHSEPASHCGTPASDQSEPVSHCGSP). Over residues 719-733 (TASSKTVAARSAQNQ) the composition is skewed to polar residues. The span at 791 to 803 (ISRRSKRMSRKAK) shows a compositional bias: basic residues. Ser894 bears the Phosphoserine mark. Positions 895–907 (PHREPSLSDHSEP) are enriched in basic and acidic residues.

It belongs to the peptidase C19 family. In terms of assembly, interacts with ELL.

It localises to the nucleus. Its subcellular location is the cajal body. SUMO-specific isopeptidase involved in protein desumoylation. Specifically binds SUMO proteins with a higher affinity for SUMO2 and SUMO3 which it cleaves more efficiently. Also able to process full-length SUMO proteins to their mature forms. Plays a key role in RNA polymerase-II-mediated snRNA transcription in the Cajal bodies. Is a component of complexes that can bind to U snRNA genes. This chain is SUMO-specific isopeptidase USPL1 (Uspl1), found in Mus musculus (Mouse).